We begin with the raw amino-acid sequence, 1319 residues long: DNA-directed RNA polymerase subunit beta' (1319 aa).

Zn(2+) contacts are provided by C60, C62, C75, and C78. Residues D535, D537, and D539 each contribute to the Mg(2+) site. C890, C971, C978, and C981 together coordinate Zn(2+).

Belongs to the RNA polymerase beta' chain family. In terms of assembly, the RNAP catalytic core consists of 2 alpha, 1 beta, 1 beta' and 1 omega subunit. When a sigma factor is associated with the core the holoenzyme is formed, which can initiate transcription. Mg(2+) serves as cofactor. Zn(2+) is required as a cofactor.

It catalyses the reaction RNA(n) + a ribonucleoside 5'-triphosphate = RNA(n+1) + diphosphate. Its function is as follows. DNA-dependent RNA polymerase catalyzes the transcription of DNA into RNA using the four ribonucleoside triphosphates as substrates. This chain is DNA-directed RNA polymerase subunit beta', found in Mycobacteroides abscessus (strain ATCC 19977 / DSM 44196 / CCUG 20993 / CIP 104536 / JCM 13569 / NCTC 13031 / TMC 1543 / L948) (Mycobacterium abscessus).